The sequence spans 335 residues: Endo-1,4-beta-xylanase S20 (335 aa).

Residues 1-22 (MLRKLVTGALAAALLLSGQSNA) form the signal peptide. The region spanning 39 to 241 (NNKNETGNGN…GSGYVDFTYA (203 aa)) is the GH11 domain. N-linked (GlcNAc...) asparagine glycans are attached at residues Asn-42 and Asn-78. Glu-134 serves as the catalytic Nucleophile. The N-linked (GlcNAc...) asparagine glycan is linked to Asn-202. The active-site Proton donor is the Glu-228. The N-linked (GlcNAc...) asparagine glycan is linked to Asn-251. A disordered region spans residues 251-291 (NASAPSNNNNNNNNNNDNNGNWNNWNNNNNNNNNNNNNNNN). The segment covering 257 to 291 (NNNNNNNNNNDNNGNWNNWNNNNNNNNNNNNNNNN) has biased composition (low complexity). In terms of domain architecture, CBM1 spans 300-335 (NCAAIWGQCGGSGYNGPKCCKQGSCKQINQWYSQCQ).

It belongs to the glycosyl hydrolase 11 (cellulase G) family.

Its subcellular location is the secreted. It carries out the reaction Endohydrolysis of (1-&gt;4)-beta-D-xylosidic linkages in xylans.. Its pathway is glycan degradation; xylan degradation. Its function is as follows. Endo-1,4-beta-xylanase involved in the hydrolysis of xylan, a major structural heterogeneous polysaccharide found in plant biomass representing the second most abundant polysaccharide in the biosphere, after cellulose. The chain is Endo-1,4-beta-xylanase S20 (xynS20) from Neocallimastix patriciarum (Rumen fungus).